The primary structure comprises 372 residues: MRSKVTGAQRWVVKIGSALLTADGKGLDRTAMGVWVEQMVALHEAGVELVLVSSGAVAAGMSRLGWTARPSAMHELQAAAAIGQMGLVQAWESSFAEHGRHTAQILLTHDDLSDRKRYLNARSTLRALVELKVIPVINENDTVVTDEIRFGDNDTLAALVANLVEADLLVILTDRDGMFDADPRSNPDAQLIYEARADDPTLDAVAGGTGGALGRGGMQTKLRAARLAARSGAHTIIVGGRLERVLDRLKAGERIGTLLSPERGMLAARKQWLAGHLQTRGTLVLDDGAVSALSQGNKSLLPVGVKLVQGSFRRGEMVVCVAPDGREIARGLANYSALEAQKIIGQSSDAIVGLLGYMAEPELVHRDNLILV.

Position 14 (lysine 14) interacts with ATP. Substrate contacts are provided by serine 54, aspartate 141, and asparagine 153. 173–174 (TD) lines the ATP pocket. Residues 280-358 (RGTLVLDDGA…DAIVGLLGYM (79 aa)) form the PUA domain.

It belongs to the glutamate 5-kinase family.

The protein localises to the cytoplasm. The enzyme catalyses L-glutamate + ATP = L-glutamyl 5-phosphate + ADP. The protein operates within amino-acid biosynthesis; L-proline biosynthesis; L-glutamate 5-semialdehyde from L-glutamate: step 1/2. Catalyzes the transfer of a phosphate group to glutamate to form L-glutamate 5-phosphate. The polypeptide is Glutamate 5-kinase (Pseudomonas fluorescens (strain Pf0-1)).